Consider the following 444-residue polypeptide: Phosphoglucosamine mutase (444 aa).

Catalysis depends on Ser102, which acts as the Phosphoserine intermediate. Residues Ser102, Asp241, Asp243, and Asp245 each contribute to the Mg(2+) site. At Ser102 the chain carries Phosphoserine.

The protein belongs to the phosphohexose mutase family. It depends on Mg(2+) as a cofactor. Activated by phosphorylation.

The catalysed reaction is alpha-D-glucosamine 1-phosphate = D-glucosamine 6-phosphate. Functionally, catalyzes the conversion of glucosamine-6-phosphate to glucosamine-1-phosphate. This Actinobacillus pleuropneumoniae serotype 5b (strain L20) protein is Phosphoglucosamine mutase.